A 2276-amino-acid polypeptide reads, in one-letter code: Non-reducing polyketide synthase VdtA (2276 aa).

An N-terminal acylcarrier protein transacylase (SAT) domain region spans residues Tyr8–His243. The Ketosynthase family 3 (KS3) domain occupies Arg372–Asp804. Active-site for beta-ketoacyl synthase activity residues include Cys544, His679, and His723. Residues Phe905–Arg1206 are malonyl-CoA:ACP transacylase (MAT) domain. Ser996 acts as the For acyl/malonyl transferase activity in catalysis. Residues Thr1300 to Gln1616 are product template (PT) domain. Residues His1304–Thr1438 form an N-terminal hotdog fold region. The 309-residue stretch at His1304–Arg1612 folds into the PKS/mFAS DH domain. The Proton acceptor; for dehydratase activity role is filled by His1336. The C-terminal hotdog fold stretch occupies residues Thr1465–Arg1612. Asp1525 serves as the catalytic Proton donor; for dehydratase activity. Residues Ser1655 to Asn1729 form the Carrier 1 domain. Ser1689 is modified (O-(pantetheine 4'-phosphoryl)serine). The disordered stretch occupies residues Ala1735 to Ile1762. Residues Pro1748–Pro1761 are compositionally biased toward low complexity. Residues Arg1765–Asn1839 enclose the Carrier 2 domain. Position 1799 is an O-(pantetheine 4'-phosphoryl)serine (Ser1799). A compositionally biased stretch (polar residues) spans Ser1840–Arg1854. The disordered stretch occupies residues Ser1840–Phe1882. A compositionally biased stretch (basic and acidic residues) spans Ala1857 to Asp1868. The Carrier 3 domain occupies Ala1886–Ser1964. The residue at position 1923 (Ser1923) is an O-(pantetheine 4'-phosphoryl)serine. The interval Thr1967–Pro1993 is disordered. Over residues Thr1969–Ser1990 the composition is skewed to low complexity. Residues Pro2020–Ser2271 form a thioesterase (TE) domain region.

Its subcellular location is the cytoplasmic vesicle. It carries out the reaction 7 malonyl-CoA + acetyl-CoA + 7 H(+) = 7,9,10-trihydroxy-3-(2-oxopropyl)-1H-benzo[g]isochromen-1-one + 7 CO2 + 8 CoA + 2 H2O. It participates in secondary metabolite biosynthesis. Functionally, non-reducing polyketide synthase; part of the gene cluster that mediates the biosynthesis of viriditoxin, one of the 'classical' secondary metabolites produced by fungi and that has antibacterial activity. The first step is performed by the polyketide synthase VdtA which condenses one acetyl-CoA and 6 malonyl-CoA units to form the heptaketide monomer backbone of viriditoxin. The product of VdtA is then O-methylated on C7 by the O-methyltransferase VdtC. The O-methyl group is important for the stereoselective coupling of the monomers at the final step of viriditoxin biosynthesis. The short-chain dehydrogenase/reductase VdtF then acts as a stereospecific reductase converting the pyrone to dihydropyrone via the reduction of the C3-C4 double bond. The FAD-binding monooxygenase VdtE then converts the ketone group into a methyl-ester group to yield semi-viriditoxin. Finally, the laccase VdtB is involved in dimerization of 2 semi-viriditoxin molecules to yield the final viriditoxin. VdtB is responsible for the regioselective 6,6'-coupling of semi-viriditoxin, which yields (M)-viriditoxin and (P)-viriditoxin at a ratio of 1:2. The non-catalytic carboxylesterase-like protein VdtD affects the stereochemistical outcome of the coupling. The highly reducing polyketide synthase VdtX is not involved in viriditoxin synthesis, but might possibly play a role in the production of additional metabolites not identified yet. This Byssochlamys spectabilis (Paecilomyces variotii) protein is Non-reducing polyketide synthase VdtA.